The primary structure comprises 230 residues: Large ribosomal subunit protein uL1 (230 aa).

Belongs to the universal ribosomal protein uL1 family. Part of the 50S ribosomal subunit.

Its function is as follows. Binds directly to 23S rRNA. The L1 stalk is quite mobile in the ribosome, and is involved in E site tRNA release. Functionally, protein L1 is also a translational repressor protein, it controls the translation of the L11 operon by binding to its mRNA. This Bacillus anthracis (strain A0248) protein is Large ribosomal subunit protein uL1.